Consider the following 365-residue polypeptide: Leu/Ile/Val/Thr-binding protein (365 aa).

Residues 1-21 (MKGKTLLAGCIALSLSHMAFA) form the signal peptide. C74 and C99 form a disulfide bridge.

The protein belongs to the leucine-binding protein family.

It localises to the periplasm. This protein is a component of the leucine, isoleucine, valine, threonine transport system, which is one of the two periplasmic binding protein-dependent transport systems of the high-affinity transport of the branched-chain amino acids. In Salmonella typhimurium (strain LT2 / SGSC1412 / ATCC 700720), this protein is Leu/Ile/Val/Thr-binding protein (livJ).